Consider the following 685-residue polypeptide: Probable transcriptional regulator SLK3 (685 aa).

Disordered regions lie at residues Asn25–Tyr66 and Leu108–Leu129. Positions Gln39 to Gln56 are enriched in low complexity. Residues Pro176 to Leu423 form a dimerization region. A Nuclear localization signal motif is present at residues Arg185–Arg199. The segment covering Gly447–Gln459 has biased composition (polar residues). Disordered stretches follow at residues Gly447–Ser491, Asn512–Glu591, and Gln611–Pro658. The segment covering Met460–Thr471 has biased composition (low complexity). A compositionally biased stretch (polar residues) spans Asn512–Phe524. A compositionally biased stretch (low complexity) spans Ser525–Gln543. Polar residues-rich tracts occupy residues Arg544–Asn588, Gln611–Ile636, and Arg645–Pro658.

This sequence belongs to the adn1/SEU family.

It localises to the nucleus. In terms of biological role, probable transcription regulator that functions in the development of the carpel margin meristem similarly to SEUSS (SEU). In association with SEU, supports organ development from meristematic regions by facilitating auxin response and thus organ initiation, and by sustaining meristematic potential through the maintenance of PHABULOSA expression. In Arabidopsis thaliana (Mouse-ear cress), this protein is Probable transcriptional regulator SLK3 (SLK3).